A 165-amino-acid polypeptide reads, in one-letter code: Protein-export protein SecB (165 aa).

It belongs to the SecB family. In terms of assembly, homotetramer, a dimer of dimers. One homotetramer interacts with 1 SecA dimer.

It is found in the cytoplasm. In terms of biological role, one of the proteins required for the normal export of preproteins out of the cell cytoplasm. It is a molecular chaperone that binds to a subset of precursor proteins, maintaining them in a translocation-competent state. It also specifically binds to its receptor SecA. The protein is Protein-export protein SecB of Ruegeria pomeroyi (strain ATCC 700808 / DSM 15171 / DSS-3) (Silicibacter pomeroyi).